The sequence spans 330 residues: Flotillin-like protein FloA (330 aa).

The next 2 membrane-spanning stretches (helical) occupy residues F5–V25 and F27–L47.

Belongs to the flotillin-like FloA family. As to quaternary structure, homooligomerizes.

The protein localises to the cell membrane. It is found in the membrane raft. Functionally, found in functional membrane microdomains (FMM) that may be equivalent to eukaryotic membrane rafts. FMMs are highly dynamic and increase in number as cells age. Flotillins are thought to be important factors in membrane fluidity. In Parabacteroides distasonis (strain ATCC 8503 / DSM 20701 / CIP 104284 / JCM 5825 / NCTC 11152), this protein is Flotillin-like protein FloA.